The chain runs to 110 residues: Thiosulfate sulfurtransferase GlpE (110 aa).

The region spanning 17-105 (RENGAQVVDI…WRSVYPADTS (89 aa)) is the Rhodanese domain. Cys-65 functions as the Cysteine persulfide intermediate in the catalytic mechanism.

This sequence belongs to the GlpE family.

The protein localises to the cytoplasm. It catalyses the reaction thiosulfate + hydrogen cyanide = thiocyanate + sulfite + 2 H(+). The catalysed reaction is thiosulfate + [thioredoxin]-dithiol = [thioredoxin]-disulfide + hydrogen sulfide + sulfite + 2 H(+). Functionally, transferase that catalyzes the transfer of sulfur from thiosulfate to thiophilic acceptors such as cyanide or dithiols. May function in a CysM-independent thiosulfate assimilation pathway by catalyzing the conversion of thiosulfate to sulfite, which can then be used for L-cysteine biosynthesis. In Pseudomonas aeruginosa (strain ATCC 15692 / DSM 22644 / CIP 104116 / JCM 14847 / LMG 12228 / 1C / PRS 101 / PAO1), this protein is Thiosulfate sulfurtransferase GlpE.